Reading from the N-terminus, the 147-residue chain is D-aminoacyl-tRNA deacylase (147 aa).

Positions 136 to 137 match the Gly-cisPro motif, important for rejection of L-amino acids motif; that stretch reads GP.

It belongs to the DTD family. In terms of assembly, homodimer.

Its subcellular location is the cytoplasm. The catalysed reaction is glycyl-tRNA(Ala) + H2O = tRNA(Ala) + glycine + H(+). It catalyses the reaction a D-aminoacyl-tRNA + H2O = a tRNA + a D-alpha-amino acid + H(+). Its function is as follows. An aminoacyl-tRNA editing enzyme that deacylates mischarged D-aminoacyl-tRNAs. Also deacylates mischarged glycyl-tRNA(Ala), protecting cells against glycine mischarging by AlaRS. Acts via tRNA-based rather than protein-based catalysis; rejects L-amino acids rather than detecting D-amino acids in the active site. By recycling D-aminoacyl-tRNA to D-amino acids and free tRNA molecules, this enzyme counteracts the toxicity associated with the formation of D-aminoacyl-tRNA entities in vivo and helps enforce protein L-homochirality. The protein is D-aminoacyl-tRNA deacylase of Streptococcus suis (strain 98HAH33).